The chain runs to 151 residues: Deoxyuridine 5'-triphosphate nucleotidohydrolase (151 aa).

Residues 70–72 (RSG), N83, 87–89 (LID), and M97 contribute to the substrate site.

It belongs to the dUTPase family. The cofactor is Mg(2+).

The catalysed reaction is dUTP + H2O = dUMP + diphosphate + H(+). Its pathway is pyrimidine metabolism; dUMP biosynthesis; dUMP from dCTP (dUTP route): step 2/2. Functionally, this enzyme is involved in nucleotide metabolism: it produces dUMP, the immediate precursor of thymidine nucleotides and it decreases the intracellular concentration of dUTP so that uracil cannot be incorporated into DNA. The polypeptide is Deoxyuridine 5'-triphosphate nucleotidohydrolase (Pseudomonas syringae pv. tomato (strain ATCC BAA-871 / DC3000)).